The chain runs to 421 residues: Inhibitor of growth protein 3 (421 aa).

A disordered region spans residues 129 to 163; the sequence is PSQPVNNHHAHSHTPVEKRKYNPTSHHAAADHIPE. Glycyl lysine isopeptide (Lys-Gly) (interchain with G-Cter in SUMO2) cross-links involve residues Lys-148, Lys-165, and Lys-167. Lys-181 carries the post-translational modification N6-acetyllysine. A Glycyl lysine isopeptide (Lys-Gly) (interchain with G-Cter in SUMO2) cross-link involves residue Lys-256. Residue Lys-264 is modified to N6-acetyllysine. Residues 286 to 296 show a composition bias toward polar residues; it reads TQNASSSATDS. Residues 286-323 form a disordered region; it reads TQNASSSATDSRSGRKSKNNTKSSSQQSSSSSSSSSSS. Residues 308 to 323 are compositionally biased toward low complexity; sequence SSSQQSSSSSSSSSSS. A PHD-type zinc finger spans residues 363–412; that stretch reads PRYCICNQVSYGEMVGCDNQDCPIEWFHYGCVGLTEAPKGKWFCPQCTAA. Zn(2+)-binding residues include Cys-366, Cys-368, Cys-379, Cys-384, His-390, Cys-393, Cys-406, and Cys-409.

It belongs to the ING family. Interacts with H3K4me3 and to a lesser extent with H3K4me2. Component of the NuA4 histone acetyltransferase complex which contains the catalytic subunit KAT5/TIP60 and the subunits EP400, TRRAP/PAF400, BRD8/SMAP, EPC1, DMAP1/DNMAP1, RUVBL1/TIP49, RUVBL2, ING3, actin, ACTL6A/BAF53A, MORF4L1/MRG15, MORF4L2/MRGX, MRGBP, YEATS4/GAS41, VPS72/YL1 and MEAF6. The NuA4 complex interacts with MYC. HTATTIP/TIP60, EPC1, and ING3 together constitute a minimal HAT complex termed Piccolo NuA4. Component of a SWR1-like complex.

The protein resides in the nucleus. In terms of biological role, component of the NuA4 histone acetyltransferase (HAT) complex which is involved in transcriptional activation of select genes principally by acetylation of nucleosomal histones H4 and H2A. This modification may both alter nucleosome - DNA interactions and promote interaction of the modified histones with other proteins which positively regulate transcription. This complex may be required for the activation of transcriptional programs associated with oncogene and proto-oncogene mediated growth induction, tumor suppressor mediated growth arrest and replicative senescence, apoptosis, and DNA repair. NuA4 may also play a direct role in DNA repair when directly recruited to sites of DNA damage. Component of a SWR1-like complex that specifically mediates the removal of histone H2A.Z/H2AZ1 from the nucleosome. This chain is Inhibitor of growth protein 3 (Ing3), found in Mus musculus (Mouse).